Reading from the N-terminus, the 1138-residue chain is BMP-2-inducible protein kinase (1138 aa).

S13 is subject to Phosphoserine. The Protein kinase domain maps to 48–313 (VTLEESLAEG…DIFQVSYFAF (266 aa)). Residues 54–62 (LAEGGFSTV) and K76 each bind ATP. Residue D177 is the Proton acceptor of the active site. 3 disordered regions span residues 355-435 (TDTI…RVLQ), 638-831 (NRLG…PADA), and 906-1018 (PRSV…EFLT). The span at 358–390 (IGPTETSIAPRQRPKANSTAATSSVLTIQSSAT) shows a compositional bias: polar residues. The segment covering 417–435 (VLMVQGPPQQPPQQHRVLQ) has biased composition (low complexity). A Phosphoserine modification is found at S676. The span at 684 to 701 (HSPNQKSITANLTKNGGS) shows a compositional bias: polar residues. Over residues 706 to 715 (KDQRAGKKTS) the composition is skewed to basic and acidic residues. Phosphoserine occurs at positions 733, 806, and 807. A compositionally biased stretch (basic and acidic residues) spans 787–813 (DKHSSDSECEQAKTKRGDTSSLRRDKP). At T819 the chain carries Phosphothreonine. S908 is subject to Phosphoserine. Positions 915 to 926 (TPFQPFSVSASK) are enriched in polar residues. Residues 951 to 965 (VKQRSLQKLSSRQRR) show a composition bias toward basic residues. 7 positions are modified to phosphoserine: S1010, S1012, S1013, S1020, S1022, S1087, and S1091. The tract at residues 1117-1138 (TPQQSQPVELDPFGAAPFPSKQ) is disordered.

Belongs to the protein kinase superfamily. Ser/Thr protein kinase family. In terms of processing, autophosphorylated. As to expression, expressed in osteocytes and osteoblasts.

The protein localises to the nucleus. The enzyme catalyses L-seryl-[protein] + ATP = O-phospho-L-seryl-[protein] + ADP + H(+). It catalyses the reaction L-threonyl-[protein] + ATP = O-phospho-L-threonyl-[protein] + ADP + H(+). In terms of biological role, may be involved in osteoblast differentiation. This Mus musculus (Mouse) protein is BMP-2-inducible protein kinase (Bmp2k).